The sequence spans 88 residues: Small ribosomal subunit protein uS15 (88 aa).

The protein belongs to the universal ribosomal protein uS15 family. As to quaternary structure, part of the 30S ribosomal subunit. Forms a bridge to the 50S subunit in the 70S ribosome, contacting the 23S rRNA.

Functionally, one of the primary rRNA binding proteins, it binds directly to 16S rRNA where it helps nucleate assembly of the platform of the 30S subunit by binding and bridging several RNA helices of the 16S rRNA. In terms of biological role, forms an intersubunit bridge (bridge B4) with the 23S rRNA of the 50S subunit in the ribosome. This is Small ribosomal subunit protein uS15 from Mycoplasma mycoides subsp. mycoides SC (strain CCUG 32753 / NCTC 10114 / PG1).